The chain runs to 304 residues: N-acetylmuramic acid 6-phosphate etherase (304 aa).

Residues 62–225 (IVQAFQNGGR…TTASMVMIGK (164 aa)) enclose the SIS domain. Glutamate 90 serves as the catalytic Proton donor. Glutamate 121 is an active-site residue.

It belongs to the GCKR-like family. MurNAc-6-P etherase subfamily. In terms of assembly, homodimer.

It catalyses the reaction N-acetyl-D-muramate 6-phosphate + H2O = N-acetyl-D-glucosamine 6-phosphate + (R)-lactate. It participates in amino-sugar metabolism; 1,6-anhydro-N-acetylmuramate degradation. It functions in the pathway amino-sugar metabolism; N-acetylmuramate degradation. The protein operates within cell wall biogenesis; peptidoglycan recycling. Specifically catalyzes the cleavage of the D-lactyl ether substituent of MurNAc 6-phosphate, producing GlcNAc 6-phosphate and D-lactate. Together with AnmK, is also required for the utilization of anhydro-N-acetylmuramic acid (anhMurNAc) either imported from the medium or derived from its own cell wall murein, and thus plays a role in cell wall recycling. This chain is N-acetylmuramic acid 6-phosphate etherase, found in Actinobacillus pleuropneumoniae serotype 5b (strain L20).